The chain runs to 179 residues: tRNA (cytidine(56)-2'-O)-methyltransferase (179 aa).

Leu84 serves as a coordination point for S-adenosyl-L-methionine.

The protein belongs to the aTrm56 family. Homodimer.

Its subcellular location is the cytoplasm. It carries out the reaction cytidine(56) in tRNA + S-adenosyl-L-methionine = 2'-O-methylcytidine(56) in tRNA + S-adenosyl-L-homocysteine + H(+). In terms of biological role, specifically catalyzes the AdoMet-dependent 2'-O-ribose methylation of cytidine at position 56 in tRNAs. The protein is tRNA (cytidine(56)-2'-O)-methyltransferase of Methanothermobacter thermautotrophicus (strain ATCC 29096 / DSM 1053 / JCM 10044 / NBRC 100330 / Delta H) (Methanobacterium thermoautotrophicum).